The chain runs to 266 residues: Glutamate racemase (266 aa).

Substrate is bound by residues 9–10 (DS) and 41–42 (YG). Catalysis depends on Cys73, which acts as the Proton donor/acceptor. Substrate is bound at residue 74–75 (NS). The active-site Proton donor/acceptor is the Cys183. Residue 184-185 (TH) participates in substrate binding.

It belongs to the aspartate/glutamate racemases family.

It catalyses the reaction L-glutamate = D-glutamate. Its pathway is cell wall biogenesis; peptidoglycan biosynthesis. In terms of biological role, provides the (R)-glutamate required for cell wall biosynthesis. This chain is Glutamate racemase, found in Shewanella loihica (strain ATCC BAA-1088 / PV-4).